Reading from the N-terminus, the 463-residue chain is Interferon-inducible GTPase 5 (463 aa).

The IRG-type G domain occupies 52-234; sequence TRLEVGVTGE…PMLVTTWEHD (183 aa). Residues 61 to 68, 86 to 90, 168 to 170, and 215 to 217 each bind GTP; these read ESGAGKSS, TGVVE, KVD, and SNL. A phosphoserine mark is found at serine 246 and serine 303. The disordered stretch occupies residues 409–438; that stretch reads QGEVSLEAAGDNAVEKRSSGEGTSEEAPLS.

It belongs to the TRAFAC class dynamin-like GTPase superfamily. IRG family.

Its subcellular location is the cell projection. It is found in the cilium. The protein resides in the flagellum. The protein localises to the lipid droplet. It catalyses the reaction GTP + H2O = GDP + phosphate + H(+). Functionally, required for sperm motility and therefore male fertility, via positive regulation of spermatozoa fibrous sheath formation. The protein is Interferon-inducible GTPase 5 (Irgc) of Rattus norvegicus (Rat).